Reading from the N-terminus, the 199-residue chain is Recombination protein RecR (199 aa).

The segment at 57-72 adopts a C4-type zinc-finger fold; it reads CEICGNMDTKNICHIC. Residues 80–175 form the Toprim domain; the sequence is STIAIVETVA…KISRLASGIP (96 aa).

It belongs to the RecR family.

In terms of biological role, may play a role in DNA repair. It seems to be involved in an RecBC-independent recombinational process of DNA repair. It may act with RecF and RecO. This is Recombination protein RecR from Rickettsia typhi (strain ATCC VR-144 / Wilmington).